The chain runs to 417 residues: Serine hydroxymethyltransferase (417 aa).

(6S)-5,6,7,8-tetrahydrofolate-binding positions include L121 and 125-127 (GHL). K230 is subject to N6-(pyridoxal phosphate)lysine. Residue 355–357 (SPF) coordinates (6S)-5,6,7,8-tetrahydrofolate.

The protein belongs to the SHMT family. Homodimer. Pyridoxal 5'-phosphate is required as a cofactor.

It localises to the cytoplasm. The enzyme catalyses (6R)-5,10-methylene-5,6,7,8-tetrahydrofolate + glycine + H2O = (6S)-5,6,7,8-tetrahydrofolate + L-serine. It participates in one-carbon metabolism; tetrahydrofolate interconversion. The protein operates within amino-acid biosynthesis; glycine biosynthesis; glycine from L-serine: step 1/1. Catalyzes the reversible interconversion of serine and glycine with tetrahydrofolate (THF) serving as the one-carbon carrier. This reaction serves as the major source of one-carbon groups required for the biosynthesis of purines, thymidylate, methionine, and other important biomolecules. Also exhibits THF-independent aldolase activity toward beta-hydroxyamino acids, producing glycine and aldehydes, via a retro-aldol mechanism. In Legionella pneumophila (strain Lens), this protein is Serine hydroxymethyltransferase.